We begin with the raw amino-acid sequence, 407 residues long: E3 ubiquitin-protein ligase TRIM13 (407 aa).

An RING-type zinc finger spans residues 10–58 (CPICCSLFDDPRVLPCSHNFCKKCLEGILEGNVRNSLWRSSPFKCPTCR). A B box-type zinc finger spans residues 89-131 (PKMPVCKGHLGQPLNIFCLTDMQLICGICATRGEHTKHVFCSI). Zn(2+) contacts are provided by C94, H97, C117, and H123. A coiled-coil region spans residues 172-200 (LQLLTKDSDKVKEFFEKLQYTLDQKKNEI). Residues 316–336 (PLFVVVILLGLLIFFSPTMFL) form a helical membrane-spanning segment.

As to quaternary structure, interacts (via C-terminal domain) with VCP. Interacts with AKT1; the interaction ubiquitinates AKT1 and leads to its proteasomal degradation. Interacts with MDM2; the interaction ubiquitinates AKT1 and leads to its proteasomal degradation. Interacts with p62/SQSTM1. Interacts with TRAF6. Interacts with IKBKG/NEMO. Auto-ubiquitinated; requires the RING-type zinc finger. Auto-polyubiquitination leads to proteasomal degradation.

It localises to the endoplasmic reticulum membrane. The enzyme catalyses S-ubiquitinyl-[E2 ubiquitin-conjugating enzyme]-L-cysteine + [acceptor protein]-L-lysine = [E2 ubiquitin-conjugating enzyme]-L-cysteine + N(6)-ubiquitinyl-[acceptor protein]-L-lysine.. It participates in protein modification; protein ubiquitination. Endoplasmic reticulum (ER) membrane anchored E3 ligase involved in the retrotranslocation and turnover of membrane and secretory proteins from the ER through a set of processes named ER-associated degradation (ERAD). This process acts on misfolded proteins as well as in the regulated degradation of correctly folded proteins. Enhances ionizing radiation-induced p53/TP53 stability and apoptosis via ubiquitinating MDM2 and AKT1 and decreasing AKT1 kinase activity through MDM2 and AKT1 proteasomal degradation. Regulates ER stress-induced autophagy, and may act as a tumor suppressor. Also plays a role in innate immune response by stimulating NF-kappa-B activity in the TLR2 signaling pathway. Ubiquitinates TRAF6 via the 'Lys-29'-linked polyubiquitination chain resulting in NF-kappa-B activation. Participates as well in T-cell receptor-mediated NF-kappa-B activation. In the presence of TNF, modulates the IKK complex by regulating IKBKG/NEMO ubiquitination leading to the repression of NF-kappa-B. In Bos taurus (Bovine), this protein is E3 ubiquitin-protein ligase TRIM13 (TRIM13).